The chain runs to 313 residues: Olfactory receptor 8B2 (313 aa).

The Extracellular portion of the chain corresponds to 1 to 25; the sequence is MLARNNSLVTEFILAGLTDHPEFRQ. Asn5 carries N-linked (GlcNAc...) asparagine glycosylation. Residues 26-46 form a helical membrane-spanning segment; the sequence is PLFFLFLVIYIVTMVGNLGLI. The Cytoplasmic segment spans residues 47–54; that stretch reads TLFGLNSH. The chain crosses the membrane as a helical span at residues 55 to 75; the sequence is LHTPMYYFLFNLSFIDLCYSS. The Extracellular segment spans residues 76 to 99; sequence VFTPKMLMNFVSKKNIISNVGCMT. A disulfide bridge connects residues Cys97 and Cys189. Residues 100-120 traverse the membrane as a helical segment; that stretch reads RLFFFLFFVISECYMLTSMAY. Topologically, residues 121–139 are cytoplasmic; it reads DRYVAICNPLLYKVTMSHQ. A helical membrane pass occupies residues 140–160; that stretch reads VCSMLTFAAYIMGLAGATAHT. The Extracellular segment spans residues 161-197; it reads GCMLRLTFCSANIINHYLCDILPLLQLSCTSTYVNEV. The chain crosses the membrane as a helical span at residues 198 to 217; it reads VVLIVVGTNITVPSCTILIS. Residues 218–237 lie on the Cytoplasmic side of the membrane; it reads YVFIVTSILHIKSTQGRSKA. Residues 238–258 form a helical membrane-spanning segment; that stretch reads FSTCSSHVIALSLFFGSAAFM. Residues 259 to 270 lie on the Extracellular side of the membrane; it reads YIKYSSGSMEQG. Residues 271–291 traverse the membrane as a helical segment; the sequence is KVSSVFYTNVVPMLNPLIYSL. Over 292-313 the chain is Cytoplasmic; it reads RNKDVKVALRKALIKIQRRNIF.

This sequence belongs to the G-protein coupled receptor 1 family.

It is found in the cell membrane. Its function is as follows. Odorant receptor. This Homo sapiens (Human) protein is Olfactory receptor 8B2 (OR8B2).